The following is a 142-amino-acid chain: Nucleoside diphosphate kinase (142 aa).

Residues Lys-11, Phe-59, Arg-87, Thr-93, Arg-104, and Asn-114 each contribute to the ATP site. His-117 acts as the Pros-phosphohistidine intermediate in catalysis.

This sequence belongs to the NDK family. In terms of assembly, homotetramer. It depends on Mg(2+) as a cofactor.

It is found in the cytoplasm. The enzyme catalyses a 2'-deoxyribonucleoside 5'-diphosphate + ATP = a 2'-deoxyribonucleoside 5'-triphosphate + ADP. It carries out the reaction a ribonucleoside 5'-diphosphate + ATP = a ribonucleoside 5'-triphosphate + ADP. Its function is as follows. Major role in the synthesis of nucleoside triphosphates other than ATP. The ATP gamma phosphate is transferred to the NDP beta phosphate via a ping-pong mechanism, using a phosphorylated active-site intermediate. The protein is Nucleoside diphosphate kinase of Yersinia pseudotuberculosis serotype O:1b (strain IP 31758).